Reading from the N-terminus, the 324-residue chain is Tyrosine--tRNA ligase (324 aa).

Y36 contributes to the L-tyrosine binding site. Positions 41 to 49 (PSGKVHLGH) match the 'HIGH' region motif. The L-tyrosine site is built by Y158, Q162, D165, and Q180. The 'KMSKS' region signature appears at 215 to 219 (KMSSS). S218 contacts ATP.

Belongs to the class-I aminoacyl-tRNA synthetase family. TyrS type 3 subfamily. As to quaternary structure, homodimer.

The protein localises to the cytoplasm. It carries out the reaction tRNA(Tyr) + L-tyrosine + ATP = L-tyrosyl-tRNA(Tyr) + AMP + diphosphate + H(+). In terms of biological role, catalyzes the attachment of tyrosine to tRNA(Tyr) in a two-step reaction: tyrosine is first activated by ATP to form Tyr-AMP and then transferred to the acceptor end of tRNA(Tyr). This Methanopyrus kandleri (strain AV19 / DSM 6324 / JCM 9639 / NBRC 100938) protein is Tyrosine--tRNA ligase.